Consider the following 317-residue polypeptide: Melanocyte-stimulating hormone receptor (317 aa).

At 1–37 (MPVLGSQRRLLGSLNCTPPATLPLTLAPNRTGPQCLE) the chain is on the extracellular side. N29 carries N-linked (GlcNAc...) asparagine glycosylation. A helical membrane pass occupies residues 38–63 (VSIPDGLFLSLGLVSLVENVLVVAAI). The Cytoplasmic portion of the chain corresponds to 64–72 (AKNRNLHSP). A helical transmembrane segment spans residues 73-93 (MYYFICCLAMSDLLVSVSNVL). Topologically, residues 94 to 118 (ETAVMLLLEAGVLATRAAVVQQLDN) are extracellular. Residues 119-140 (VIDVLICSSMVSSLCFLGAIAV) traverse the membrane as a helical segment. Residues 141–163 (DRYISIFYALRYHSVVTLPRAWR) lie on the Cytoplasmic side of the membrane. The chain crosses the membrane as a helical span at residues 164–183 (IIAAIWVASILTSVLSITYY). The Extracellular segment spans residues 184–191 (NHTVVLLC). The chain crosses the membrane as a helical span at residues 192–211 (LVGFFIAMLALMAVLYVHML). The Cytoplasmic segment spans residues 212 to 240 (ARACQHARGIARLQKRQRPIHQGFGLKGA). The chain crosses the membrane as a helical span at residues 241 to 266 (ATLTILLGVFFLCWGPFFLHLSLIVL). The Extracellular segment spans residues 267–279 (CPQHPTCGCIFKN). A helical transmembrane segment spans residues 280-300 (FNLFLALIICNAIVDPLIYAF). Over 301-317 (RSQELRKTLQEVLQCSW) the chain is Cytoplasmic. C315 carries S-palmitoyl cysteine lipidation.

It belongs to the G-protein coupled receptor 1 family. In terms of assembly, interacts with MGRN1, but does not undergo MGRN1-mediated ubiquitination; this interaction competes with GNAS-binding and thus inhibits agonist-induced cAMP production. Interacts with OPN3; the interaction results in a decrease in MC1R-mediated cAMP signaling and ultimately a decrease in melanin production in melanocytes.

Its subcellular location is the cell membrane. In terms of biological role, receptor for MSH (alpha, beta and gamma) and ACTH. The activity of this receptor is mediated by G proteins which activate adenylate cyclase. Mediates melanogenesis, the production of eumelanin (black/brown) and phaeomelanin (red/yellow), via regulation of cAMP signaling in melanocytes. In Ovis aries (Sheep), this protein is Melanocyte-stimulating hormone receptor (MC1R).